Here is an 87-residue protein sequence, read N- to C-terminus: Precursor of CEP8 (87 aa).

A signal peptide spans 1–29 (MAKALFFNFCISLLIIAILVSHEIIPTEA). Positions 30–72 (RHLRTHRKSIKNSTLTVHEGAGGLRTGGGSVKTDISKEEHGVD) are excised as a propeptide. The N-linked (GlcNAc...) asparagine glycan is linked to N41. A disordered region spans residues 41–87 (NSTLTVHEGAGGLRTGGGSVKTDISKEEHGVDEFRPTTPGNSPGIGH). Over residues 49 to 59 (GAGGLRTGGGS) the composition is skewed to gly residues. Positions 63-75 (DISKEEHGVDEFR) are enriched in basic and acidic residues. Hydroxyproline occurs at positions 76, 79, and 83.

This sequence belongs to the C-terminally encoded plant signaling peptide (CEP) family. Interacts with CEP receptors (e.g. CEPR1 and CEPR2). In terms of processing, the mature small signaling peptide is generated by proteolytic processing of the longer precursor. In terms of tissue distribution, expressed in lateral root primordia and in lateral roots excluding the meristem region. Also present in the aerial tissues, such as leaf petioles and the shoot apex region.

It is found in the secreted. The protein resides in the extracellular space. It localises to the apoplast. In terms of biological role, extracellular signaling peptide that may regulate primary root growth rate and systemic nitrogen (N)-demand signaling. Mediates up-regulation of genes involved in N uptake and assimilation pathways. The protein is Precursor of CEP8 of Arabidopsis thaliana (Mouse-ear cress).